The following is a 309-amino-acid chain: MKKITIATRGSKLAFWQANYIKDQLQKMYSYLEVDLMVIKTKGDHILDVPLAKVGGKGLFVKEIEEALLSGEADCAVHSMKDVPMELPFELCLAAITEREDPTDMFLSIKYSGVKSLPENALVGTSSLRRQAQLLALRPDLQIIPLRGNIDTRLRKLMAEEFDAIIMATAGIKRLGLIAPYMSSLPCSVMLPAVGQGALGIEVQKERQDVLELFSFLNHKETYHCIQAERDFLAGLDGGCQVPIAGYATICKQETICLEGLVAKSDGSVMIRNRLERSVSDAYDIGMTLSKILLAEGADDILASMHTIL.

The residue at position 240 (Cys-240) is an S-(dipyrrolylmethanemethyl)cysteine.

It belongs to the HMBS family. In terms of assembly, monomer. Dipyrromethane serves as cofactor.

The enzyme catalyses 4 porphobilinogen + H2O = hydroxymethylbilane + 4 NH4(+). Its pathway is porphyrin-containing compound metabolism; protoporphyrin-IX biosynthesis; coproporphyrinogen-III from 5-aminolevulinate: step 2/4. Its function is as follows. Tetrapolymerization of the monopyrrole PBG into the hydroxymethylbilane pre-uroporphyrinogen in several discrete steps. The sequence is that of Porphobilinogen deaminase from Lawsonia intracellularis (strain PHE/MN1-00).